The following is a 216-amino-acid chain: MNLVGSYAHHHHHHHSHPPHPMLHEPFLFGPASRCHQERPYFQSWLLSPADAAPDFPAGGPPPTTAVAAAAYGPDARPSQSPGRLEALGSRLPKRKGSGPKKERRRTESINSAFAELRECIPNVPADTKLSKIKTLRLATSYIAYLMDVLAKDAQAGDPEAFKAELKKTDGGRESKRKRELPQQPESFPPASGPGEKRIKGRTGWPQQVWALELNQ.

3 disordered regions span residues 1 to 20 (MNLVGSYAHHHHHHHSHPPH), 53 to 109 (APDF…RTES), and 165 to 203 (ELKKTDGGRESKRKRELPQQPESFPPASGPGEKRIKGRT). Over residues 8-18 (AHHHHHHHSHP) the composition is skewed to basic residues. The segment covering 65–78 (TAVAAAAYGPDARP) has biased composition (low complexity). Over residues 92 to 104 (LPKRKGSGPKKER) the composition is skewed to basic residues. One can recognise a bHLH domain in the interval 94–146 (KRKGSGPKKERRRTESINSAFAELRECIPNVPADTKLSKIKTLRLATSYIAYL). T107 carries the post-translational modification Phosphothreonine; by PLK4. S109 bears the Phosphoserine; by PLK4 mark. The span at 165–174 (ELKKTDGGRE) shows a compositional bias: basic and acidic residues.

In terms of assembly, efficient DNA binding requires dimerization with another bHLH protein. Forms homodimers and heterodimers with TCF3 gene products E12 and E47, HAND2 and HEY1, HEY2 and HEYL (hairy-related transcription factors). Interacts with MDFIC. Interacts with SOX15; the interaction enhances HAND1-induced differentiation of trophoblast giant cells. Phosphorylation by PLK4 disrupts the interaction with MDFIC and leads to translocation into the nucleoplasm, allowing dimerization and transcription factor activity. As to expression, smooth muscle cells of the gut and adrenal tissue.

Its subcellular location is the nucleus. It is found in the nucleoplasm. It localises to the nucleolus. Functionally, transcription factor that plays an essential role in both trophoblast giant cell differentiation and in cardiac morphogenesis. Binds the DNA sequence 5'-NRTCTG-3' (non-canonical E-box). Acts as a transcriptional repressor of SOX15. In the adult, could be required for ongoing expression of cardiac-specific genes. In Mus musculus (Mouse), this protein is Heart- and neural crest derivatives-expressed protein 1 (Hand1).